Here is a 1081-residue protein sequence, read N- to C-terminus: Dyslexia-associated protein KIAA0319 homolog (1081 aa).

The first 22 residues, Met-1–Ser-22, serve as a signal peptide directing secretion. The MANSC domain maps to Gln-23 to Tyr-99. The Extracellular segment spans residues Gln-23 to Ser-964. Disordered regions lie at residues Leu-141–Tyr-160, Leu-168–Pro-216, and Asn-228–Glu-298. 3 stretches are compositionally biased toward polar residues: residues Ala-197–Glu-209, Asn-228–Pro-253, and His-283–Glu-298. PKD domains lie at Ala-345 to Ala-436, Val-444 to Ser-533, Val-539 to Glu-629, Asn-630 to Glu-723, and Arg-729 to Asp-820. N-linked (GlcNAc...) asparagine glycosylation is found at Asn-430 and Asn-522. A helical transmembrane segment spans residues Val-965–Val-985. Over Cys-986–Arg-1081 the chain is Cytoplasmic. Residues Tyr-1004–Leu-1007 carry the Endocytosis signal motif.

Homodimer. Interacts with AP2M1; required for clathrin-mediated endocytosis. Post-translationally, N-glycosylated. In terms of processing, O-glycosylated. Shedding of the extracellular domain and intramembrane cleavage produce several proteolytic products. The intramembrane cleavage releases a soluble cytoplasmic polypeptide that translocates to the nucleolus. As to expression, highly expressed during development in ventricular zone, intermediate zone, cortical plate, striatum, hippocampus, and brain stem.

The protein resides in the cell membrane. Its subcellular location is the early endosome membrane. In terms of biological role, involved in neuronal migration during development of the cerebral neocortex. May function in a cell autonomous and a non-cell autonomous manner and play a role in appropriate adhesion between migrating neurons and radial glial fibers. May also regulate growth and differentiation of dendrites. The sequence is that of Dyslexia-associated protein KIAA0319 homolog from Rattus norvegicus (Rat).